A 153-amino-acid chain; its full sequence is MRDRMERLVVLPFSIGCISVSSVAVLSPLSKPHHHHSRQVIREQEEEDNMKNVFKFLAVSKPEISIGINRIFKSFKTISQLFADKDEEKEEVETSGMEIGVPTNVKHVSHIGWESGLTAATGPGKGWEDLIPPELLAAAASKKEINPHLHPTL.

Positions 99-112 constitute a CRIB domain; that stretch reads IGVPTNVKHVSHIG.

As to quaternary structure, interacts with ARAC4/ROP2 and ARAC11/ROP1. As to expression, expressed in roots, leaves, stems, flowers, siliques and pollen.

It is found in the cell membrane. In terms of biological role, functions as a downstream effector of Rho-related GTP binding proteins of the 'Rho of Plants' (ROPs) family. Participates in the propagation of ROP GTPase signals in specific cellular responses. Required for actin cortical microfilament assembly. Activated by ARAC4/ROP2 to promote the assembly of cortical actin microfilaments required for lobe formation and lateral expansion of pavement cells. Interaction with, and activation by ARAC4/ROP2 is inhibited by RIC1. Functions as a downstream effector of ARAC11/ROP1 to promote the assembly of apical F-actin associated with vesicle accumulation in the tip of the growing pollen tube. Counteracts the ARAC11/ROP1-RIC3 pathway, which activates calcium signaling that leads to apical F-actin disassembly associated with exocytosis, to control actin dynamics and pollen tube apical growth. Downstream of ARAC11/ROP1, is involved in the growth responses to the root-colonizing endophytic fungus P.indica. This Arabidopsis thaliana (Mouse-ear cress) protein is CRIB domain-containing protein RIC4 (RIC4).